Consider the following 549-residue polypeptide: Cation/acetate symporter ActP (549 aa).

The next 13 helical transmembrane spans lie at 33–53, 77–97, 103–123, 148–168, 183–203, 206–226, 262–282, 303–323, 355–375, 404–424, 428–448, 464–484, and 493–513; these read WQAI…TYWA, LAIA…ALVF, GLIY…LIAE, ILSA…QMVG, IAVV…GMLA, WVQI…AFMV, ISAL…PHIL, GFMG…IMLV, LFLG…VAGL, VSKI…VLFE, IAFM…PIIL, GGWL…TIWV, and IFPY…GIWF.

The protein belongs to the sodium:solute symporter (SSF) (TC 2.A.21) family.

The protein localises to the cell inner membrane. Its function is as follows. Transports acetate. The protein is Cation/acetate symporter ActP of Escherichia coli O6:K15:H31 (strain 536 / UPEC).